Consider the following 285-residue polypeptide: MFKDFFNRTKKKKYLTVQDSKNNDVPAGIMTKCPKCKKIMYTKELAENLNVCFNCDHHIALTAYKRIEAISDEGSFTEFDKGMTSANPLDFPSYLEKIEKDQQKTGLKEAVVTGTAQLDGMKFGVAVMDSRFRMGSMGSVIGEKICRIIDYCTENRLPFILFSASGGARMQEGIISLMQMGKTSVSLKRHSDAGLLYISYLTHPTTGGVSASFASVGDINLSEPKALIGFAGRRVIEQTINEKLPDDFQTAEFLLEHGQLDKVVHRNDMRQTLSEILKIHQEVTK.

A CoA carboxyltransferase N-terminal domain is found at 29–285 (IMTKCPKCKK…ILKIHQEVTK (257 aa)). Zn(2+) is bound by residues cysteine 33, cysteine 36, cysteine 52, and cysteine 55. The segment at 33 to 55 (CPKCKKIMYTKELAENLNVCFNC) adopts a C4-type zinc-finger fold.

This sequence belongs to the AccD/PCCB family. As to quaternary structure, acetyl-CoA carboxylase is a heterohexamer composed of biotin carboxyl carrier protein (AccB), biotin carboxylase (AccC) and two subunits each of ACCase subunit alpha (AccA) and ACCase subunit beta (AccD). Zn(2+) serves as cofactor.

It localises to the cytoplasm. It carries out the reaction N(6)-carboxybiotinyl-L-lysyl-[protein] + acetyl-CoA = N(6)-biotinyl-L-lysyl-[protein] + malonyl-CoA. It participates in lipid metabolism; malonyl-CoA biosynthesis; malonyl-CoA from acetyl-CoA: step 1/1. Component of the acetyl coenzyme A carboxylase (ACC) complex. Biotin carboxylase (BC) catalyzes the carboxylation of biotin on its carrier protein (BCCP) and then the CO(2) group is transferred by the transcarboxylase to acetyl-CoA to form malonyl-CoA. This chain is Acetyl-coenzyme A carboxylase carboxyl transferase subunit beta, found in Staphylococcus aureus (strain Mu3 / ATCC 700698).